The primary structure comprises 685 residues: MDVCARLALWLLWGLLLHQGQSLSHSHSEKNTGASSGATSEESTEAEFCRIDKPLCHSEDEKLSFEAVRNIHKLMDDDANGDVDVEESDEFLREDLNYHDPTVKHSTFHGEDKLISVEDLWKAWKSSEVYNWTVDEVIQWLITYVELPQYEETFRKLQLTGHAMPRLAVTNTTMTGTVLKMTDRSHRQKLQLKALDTVLFGPPLLTRHNHLKDFMLVVSIVIGVGGCWFAYIQNRYSKEHMKKMMKDLEGLHRAEQSLHDLQERLHKAQEEHRTVEVEKVHLEKKLRDEINLAKQEAQRLKELREGTENERSRQKYAEEELEQVREALRKAEKELESHSSWYAPEALQKWLQLTHEVEVQYYNIKKQNAERQLLVAKEGAEKIKKKRNTLFGTFHVAHSSSLDDVDHKILTAKQALSEVTAALRERLHRWQQIEILCGFQIVNNPGIHSLVAALNIDPSWMGSTRPNPAHFIMTDDVDDMDEEIVSPLSMQSPSLQSSVRQRLTEPQLGLGSQRDLTHSDSESSLHMSDRQRVAPKPPQMGRAADEALNAMPSNGSHRLIEGVHPGSLVEKLPDSPALAKKTFMALNHGLDKAHSLMELNPSVPPGGSPLLDSSHSLSPSSPDPDTPSPVGDNRALQGSRNTRIPHLAGKKAMAEEDNGSIGEETDSSPGRKKFPLKIFKKPLKK.

The signal sequence occupies residues 1–22; it reads MDVCARLALWLLWGLLLHQGQS. The Extracellular portion of the chain corresponds to 23–213; it reads LSHSHSEKNT…LLTRHNHLKD (191 aa). The tract at residues 24-43 is disordered; the sequence is SHSHSEKNTGASSGATSEES. The segment covering 32-41 has biased composition (low complexity); it reads TGASSGATSE. 2 consecutive EF-hand domains span residues 64 to 97 and 102 to 126; these read SFEA…EDLN and TVKH…AWKS. Residues Asp76, Asp78, Asn80, Asp82, and Glu87 each contribute to the Ca(2+) site. Asn131 and Asn171 each carry an N-linked (GlcNAc...) asparagine glycan. Positions 132 to 200 constitute an SAM domain; it reads WTVDEVIQWL…QLKALDTVLF (69 aa). Residues 214–234 form a helical membrane-spanning segment; sequence FMLVVSIVIGVGGCWFAYIQN. At 235 to 685 the chain is on the cytoplasmic side; the sequence is RYSKEHMKKM…LKIFKKPLKK (451 aa). A coiled-coil region spans residues 248 to 442; it reads LEGLHRAEQS…IEILCGFQIV (195 aa). Ser257 carries the phosphoserine modification. Residues 344–442 are SOAR/CAD; that stretch reads PEALQKWLQL…IEILCGFQIV (99 aa). A contributes to fast Ca(2+)-dependent inactivation of CRAC channels region spans residues 475 to 483; the sequence is DDVDDMDEE. Residues 490–499 are compositionally biased toward low complexity; the sequence is MQSPSLQSSV. Positions 490–541 are disordered; it reads MQSPSLQSSVRQRLTEPQLGLGSQRDLTHSDSESSLHMSDRQRVAPKPPQMG. The residue at position 504 (Thr504) is a Phosphothreonine. Phosphoserine is present on Ser512. Residues 515-532 are compositionally biased toward basic and acidic residues; it reads DLTHSDSESSLHMSDRQR. A Phosphothreonine modification is found at Thr517. Ser519, Ser521, Ser523, Ser524, Ser567, Ser575, Ser602, Ser608, Ser618, Ser621, and Ser628 each carry phosphoserine. Residues 596-685 form a disordered region; that stretch reads LMELNPSVPP…LKIFKKPLKK (90 aa). Low complexity predominate over residues 608–620; that stretch reads SPLLDSSHSLSPS. The Microtubule tip localization signal motif lies at 642-645; it reads TRIP. Positions 655–666 are enriched in acidic residues; sequence EEDNGSIGEETD. Phosphoserine is present on Ser660. Thr665 is subject to Phosphothreonine. Ser668 bears the Phosphoserine mark. Positions 670 to 685 are enriched in basic residues; that stretch reads GRKKFPLKIFKKPLKK. The segment at 672 to 685 is required for generation of inwardly rectifying CRAC currents; sequence KKFPLKIFKKPLKK.

Monomer in the presence of Ca(2+). It oligomerizes in absence of Ca(2+). Forms homooligomers and heterooligomers with STIM2. Interacts with pore-forming subunits of CRAC channels, ORAI1, ORAI2 and ORAI3; this interaction is potentiated upon Ca(2+) store depletion. Interacts (via the transmembrane region and the SOAR/CAD domain) with SPPL3; the interaction promotes the binding of STIM1 to ORAI1. Interacts with ORAI1. Interacts with MAPRE1; probably required for targeting to the growing microtubule plus ends. Interacts with CRACR2A/EFCAB4B; the interaction is direct and takes place in absence of Ca(2+). Forms a complex with CRACR2A/EFCAB4B and ORAI1 at low concentration of Ca(2+), the complex dissociates at elevated Ca(2+) concentrations. Interacts with SARAF, promoting a slow inactivation of STIM1-dependent SOCE activity, possibly by facilitating the deoligomerization of STIM1. Interacts with EFHB; the interaction takes place upon Ca(2+)-store depletion and inhibits the association with SARAF. Interacts with ASPH. Interacts with SLC35G1; intracellular Ca(2+)-dependent. May interact with ATP1A1, ATP2A2, ATP2B1, ATP2B4, KPNB1 and XPO1; through SLC35G1. Interacts with STIMATE, promoting STIM1 conformational switch. Interacts with TMEM178A. Interacts with CASQ1 (via C-terminal end and preferentially with the monomeric form); this interaction increases in response to a depletion of intracellular Ca(2+), decreases both STIM1 aggregation and clustering, interaction of STIM1 with ORAI1 and store-operated Ca(2+) entry (SOCE) activity. Interacts with ADCY8. Interacts with TMEM203. Post-translationally, glycosylation is required for cell surface expression. In terms of processing, phosphorylated predominantly on Ser residues. In terms of tissue distribution, expressed in maturation-stage ameloblasts (at protein level). Expressed in all tissues examined and in many cell types, including bone marrow stroma, fibroblast, B-cell precursors, lymphoma and erythroleukemia.

Its subcellular location is the cell membrane. The protein localises to the endoplasmic reticulum membrane. The protein resides in the sarcoplasmic reticulum. It localises to the cytoplasm. It is found in the cytoskeleton. Acts as a Ca(2+) sensor that gates two major inward rectifying Ca(2+) channels at the plasma membrane: Ca(2+) release-activated Ca(2+) (CRAC) channels and arachidonate-regulated Ca(2+)-selective (ARC) channels. Plays a role in mediating store-operated Ca(2+) entry (SOCE), a Ca(2+) influx following depletion of intracellular Ca(2+) stores. Upon Ca(2+) depletion, translocates from the endoplasmic reticulum to the plasma membrane where it activates CRAC channel pore-forming subunits ORA1, ORA2 and ORAI3 to generate sustained and oscillatory Ca(2+) entry. Involved in enamel formation. In Mus musculus (Mouse), this protein is Stromal interaction molecule 1 (Stim1).